A 2028-amino-acid chain; its full sequence is Protein Daple (2028 aa).

The Calponin-homology (CH) domain occupies 11-131 (LFLQSPLVTW…KVLLLVLGCA (121 aa)). Residues 222–250 (AQHPPSPIKSSSADSTPSPTSSLSSEDKQ) are disordered. 2 positions are modified to phosphoserine: Ser227 and Ser239. The segment covering 229-245 (IKSSSADSTPSPTSSLS) has biased composition (low complexity). Coiled coils occupy residues 247–428 (EDKQ…SMNE), 456–1017 (ELNE…QGEG), 1045–1094 (HKEA…SSQI), and 1139–1393 (LQNH…DQYK). Position 486 is a phosphoserine (Ser486). Residues 1011-1024 (RQNQGEGQHLQNSF) show a composition bias toward polar residues. Positions 1011–1043 (RQNQGEGQHLQNSFKHPAGKTAASHQGKEAWGP) are disordered. Positions 1419–1428 (KEGSRERLKS) are enriched in basic and acidic residues. 2 disordered regions span residues 1419-1724 (KEGS…GAKM) and 1736-1803 (AAPT…SLSR). 3 stretches are compositionally biased toward low complexity: residues 1439-1450 (SSDPASPAASQP), 1517-1534 (SRTC…NSTP), and 1568-1588 (SRPS…PLNL). Ser1444 carries the phosphoserine modification. The span at 1589–1604 (KGSSEQLHGRSESFSS) shows a compositional bias: polar residues. A Phosphoserine modification is found at Ser1601. Positions 1661–1691 (CSASPSSEMVTLEEFLEESNRSSPTHDTPSC) match the GBA motif. Over residues 1689–1704 (PSCRDDLLSDYFRKAS) the composition is skewed to basic and acidic residues. Low complexity predominate over residues 1792–1803 (HAPASRSASLSR). A Phosphoserine modification is found at Ser1806. Residues 1816 to 2021 (SGPEACKQES…PEPGGDPQTV (206 aa)) form a disordered region. Polar residues predominate over residues 1842 to 1855 (SHTLQSPAPPSSHS). A compositionally biased stretch (basic and acidic residues) spans 1879–1897 (RPLDTRRFSLAPPKEERLA). Positions 1902–1924 (SATAPAIATAGAGAAAAGSGSNS) are enriched in low complexity. Thr1954 carries the phosphothreonine modification. A PDZ-binding motif is present at residues 2025–2028 (YGCV). The segment at 2026 to 2028 (GCV) is DVL1-binding.

This sequence belongs to the CCDC88 family. In terms of assembly, homooligomer. Interacts with DVL1 (via PDZ domain); dissociates following initiation of non-canonical Wnt signaling. Interacts (via C-terminus) with ligand-activated Wnt receptor FZD7; competes with DVL1 for binding to FZD7 and displaces DVL1 from ligand-activated FZD7. Interacts (via GBA motif) with guanine nucleotide-binding protein G(i) alpha subunits GNAI1, GNAI2 and GNAI3 (inactive GDP-bound form); interacts with higher affinity with GNAI1 and GNAI3 than with GNAI2 and interaction leads to G(i) alpha subunit activation. Does not interact with GNAO1.

The protein localises to the cytoplasm. The protein resides in the cell junction. In terms of biological role, required for activation of guanine nucleotide-binding proteins (G-proteins) during non-canonical Wnt signaling. Binds to ligand-activated Wnt receptor FZD7, displacing DVL1 from the FZD7 receptor and leading to inhibition of canonical Wnt signaling. Acts as a non-receptor guanine nucleotide exchange factor by also binding to guanine nucleotide-binding protein G(i) alpha (Gi-alpha) subunits, leading to their activation. Binding to Gi-alpha subunits displaces the beta and gamma subunits from the heterotrimeric G-protein complex, triggering non-canonical Wnt responses such as activation of RAC1 and PI3K-AKT signaling. Promotes apical constriction of cells via ARHGEF18. The polypeptide is Protein Daple (CCDC88C) (Homo sapiens (Human)).